A 232-amino-acid chain; its full sequence is MTVELEKIAGSFFISKGWKTFVHRTGLLSGQYIRFQVLTPSKINVLLFDKKKDSKLPMIPSSKKQIKTAPKRSTGITINDMPTSKHASMLISHTSNKETSSDSRTESMTDIPSSSDNSGETTRSFDDLCFCARNTAVTPDIKNYISIIGQFLQRSSKFYIVTMNNTFMKQDRLVEAAGSDSVTMLLHKSSDDRCNLKRGWATFAATNAIHLHSVCIFHFYKPPNVKITIDVL.

Residues 1-51 constitute a DNA-binding region (TF-B3 1); it reads MTVELEKIAGSFFISKGWKTFVHRTGLLSGQYIRFQVLTPSKINVLLFDKK. The interval 92-121 is disordered; sequence SHTSNKETSSDSRTESMTDIPSSSDNSGET. The span at 95-107 shows a compositional bias: basic and acidic residues; it reads SNKETSSDSRTES. Positions 108-121 are enriched in polar residues; sequence MTDIPSSSDNSGET. The segment at residues 140 to 232 is a DNA-binding region (TF-B3 2); it reads DIKNYISIIG…PNVKITIDVL (93 aa).

Its subcellular location is the nucleus. This Oryza sativa subsp. japonica (Rice) protein is Putative B3 domain-containing protein Os11g0242900.